Here is a 150-residue protein sequence, read N- to C-terminus: MVHATSPLLLLLLLSLALVAPGLSARKCSLTGEWDNNLGSNMTIGAVNDNGEFNGTYITAVADNPGNIKLSPLLGIQHKRACQPTFGFTVHWNFSESTSVFVGQCFIDRSGKEVLKTKWLQRLAVDDISDDWKATRVGYNNFTRQRTVEE.

The N-terminal stretch at 1–24 (MVHATSPLLLLLLLSLALVAPGLS) is a signal peptide. The 122-residue stretch at 26–147 (RKCSLTGEWD…GYNNFTRQRT (122 aa)) folds into the Avidin-like domain. The cysteines at positions 28 and 105 are disulfide-linked. Residues asparagine 36 and serine 40 each coordinate biotin. N-linked (GlcNAc...) asparagine glycans are attached at residues asparagine 41 and asparagine 54. Tyrosine 57, threonine 59, and aspartate 63 together coordinate biotin. The N-linked (GlcNAc...) asparagine glycan is linked to asparagine 93. 3 residues coordinate biotin: serine 95, serine 99, and asparagine 140. N-linked (GlcNAc...) asparagine glycosylation is present at asparagine 141.

It belongs to the avidin/streptavidin family. Homotetramer. In terms of processing, glycosylated.

Its subcellular location is the secreted. Its function is as follows. Forms a strong non-covalent specific complex with biotin. The polypeptide is Avidin-related protein 7 (AVR7) (Gallus gallus (Chicken)).